The sequence spans 163 residues: Peptide methionine sulfoxide reductase MsrA 1 (163 aa).

Residue Cys-21 is part of the active site.

The protein belongs to the MsrA Met sulfoxide reductase family.

It catalyses the reaction L-methionyl-[protein] + [thioredoxin]-disulfide + H2O = L-methionyl-(S)-S-oxide-[protein] + [thioredoxin]-dithiol. It carries out the reaction [thioredoxin]-disulfide + L-methionine + H2O = L-methionine (S)-S-oxide + [thioredoxin]-dithiol. Its function is as follows. Has an important function as a repair enzyme for proteins that have been inactivated by oxidation. Catalyzes the reversible oxidation-reduction of methionine sulfoxide in proteins to methionine. This is Peptide methionine sulfoxide reductase MsrA 1 (msrA1) from Nostoc sp. (strain PCC 7120 / SAG 25.82 / UTEX 2576).